The chain runs to 846 residues: Interleukin cytokine receptor-related protein 1 (846 aa).

Residues M1–T25 form the signal peptide. Residues E26–T418 are Extracellular-facing. Residues N29, N79, N186, N214, N339, and N395 are each glycosylated (N-linked (GlcNAc...) asparagine). The segment at E388–K409 is disordered. Basic and acidic residues predominate over residues S400–K409. Residues Y419–L439 form a helical membrane-spanning segment. At K440–H846 the chain is on the cytoplasmic side. Residues S476–T618 form the SEFIR domain. Residues G737–S771 are disordered. Residues T744–S771 are compositionally biased toward acidic residues.

In terms of assembly, component of a heterodimeric receptor complex composed of ilcr-1 and ilcr-2. The receptor complex interacts with actl-1 and ilc-17.1 with the interaction being mediated by ilcr-2. As to expression, expressed in most neurons.

Its subcellular location is the cell membrane. Forms a receptor complex together with receptor ilcr-2, which upon activation acts as a modulator of neuronal activity. Binding of the ligand ilc-17.1 to the ilcr-1/2 receptor complex triggers a signaling cascade that activates the downstream signaling components actl-1, pik-1 and nfki-1, and results in increased neuronal activity in RMG interneurons in response to input from oxygen-sensing neurons. This leads to increased animal movement and promotes aggregation behavior. The sequence is that of Interleukin cytokine receptor-related protein 1 from Caenorhabditis elegans.